The following is a 101-amino-acid chain: Chaperone modulatory protein CbpM (101 aa).

It belongs to the CbpM family.

In terms of biological role, interacts with CbpA and inhibits both the DnaJ-like co-chaperone activity and the DNA binding activity of CbpA. Together with CbpA, modulates the activity of the DnaK chaperone system. Does not inhibit the co-chaperone activity of DnaJ. The chain is Chaperone modulatory protein CbpM from Pseudomonas putida (strain W619).